Consider the following 384-residue polypeptide: Lipid-A-disaccharide synthase 1 (384 aa).

This sequence belongs to the LpxB family.

It catalyses the reaction a lipid X + a UDP-2-N,3-O-bis[(3R)-3-hydroxyacyl]-alpha-D-glucosamine = a lipid A disaccharide + UDP + H(+). Its pathway is bacterial outer membrane biogenesis; LPS lipid A biosynthesis. In terms of biological role, condensation of UDP-2,3-diacylglucosamine and 2,3-diacylglucosamine-1-phosphate to form lipid A disaccharide, a precursor of lipid A, a phosphorylated glycolipid that anchors the lipopolysaccharide to the outer membrane of the cell. The chain is Lipid-A-disaccharide synthase 1 from Legionella pneumophila subsp. pneumophila (strain Philadelphia 1 / ATCC 33152 / DSM 7513).